A 123-amino-acid chain; its full sequence is UPF0231 protein plu3616 (123 aa).

It belongs to the UPF0231 family.

This Photorhabdus laumondii subsp. laumondii (strain DSM 15139 / CIP 105565 / TT01) (Photorhabdus luminescens subsp. laumondii) protein is UPF0231 protein plu3616.